Here is a 62-residue protein sequence, read N- to C-terminus: U8-theraphotoxin-Cg1a 1 (62 aa).

A signal peptide spans 1-21 (MKTLVLFIIFGLAALFLLSSA). A propeptide spanning residues 22 to 29 (NELEETER) is cleaved from the precursor. Cystine bridges form between cysteine 31–cysteine 46, cysteine 38–cysteine 51, and cysteine 45–cysteine 58.

This sequence belongs to the neurotoxin 10 (Hwtx-1) family. 30 (Jztx-14) subfamily. As to expression, expressed by the venom gland.

It localises to the secreted. Functionally, probable ion channel inhibitor. This chain is U8-theraphotoxin-Cg1a 1, found in Chilobrachys guangxiensis (Chinese earth tiger tarantula).